Reading from the N-terminus, the 494-residue chain is MKKQAFSSEQYLNLQRDHILERINQFDGKLYLEFGGKMLEDFHAARVLPGYEPDNKIKLLQEFKDQVEVVIAINASNIEHSKARGDLGISYDQEVLRLIDKFNELNIYVGSVVITQYSGQPAADAFRNQLEKNGITSYIHYPIKGYPTDINHIISPEGMGKNDYIKTSRNLIVVTAPGPGSGKLATCLSNMYHDQINGIKSGYAKFETFPVWNLPLHHPVNLAYEAATADLDDVNMIDPFHLETYGKTTVNYNRDIEIFPVLKRMLERILGESPYASPTDMGVNMVGFAITDDEAAKEASKQEIIRRYYQTVLDFKNERVPETAVKKIELLMNDLGITPEDRQVVVAARAKAEETGGSALALELPNGQIVTGKNSELFGPTAAALINAIKTSAGIDKDTKLIEPEVVKPIQSLKIDHLGSRNPRLHSNEILIALAITAANNADAARAMKELSNLKGSEAHSTIILTDEDKNVLRKLGINVTFDPYYQYDKLYRK.

It belongs to the UPF0371 family.

The sequence is that of UPF0371 protein str1377 from Streptococcus thermophilus (strain CNRZ 1066).